A 321-amino-acid polypeptide reads, in one-letter code: Geranylgeranyl transferase type-2 subunit beta 1 (321 aa).

At Ser2 the chain carries N-acetylserine. PFTB repeat units lie at residues 14 to 55 (ADKH…DLLD), 62 to 103 (EEEV…ALFD), 110 to 151 (IGKV…SILK), 158 to 199 (VEKA…AITG), 206 to 247 (KDSL…IMID), and 254 to 296 (KAKL…SLLE). Residues 184-186 (HAG) and 226-229 (RPEK) contribute to the geranylgeranyl diphosphate site. Zn(2+) is bound by residues Asp232 and Cys234. Residue 235 to 238 (YSWW) participates in geranylgeranyl diphosphate binding. His284 is a Zn(2+) binding site.

It belongs to the protein prenyltransferase subunit beta family. Heterotrimer composed of the alpha subunit RGTA, the beta subunit RGTB and REP; within this trimer, RGTA and RGTB form the catalytic component, while REP mediates peptide substrate binding. The cofactor is Zn(2+). Requires Mg(2+) as cofactor.

It carries out the reaction geranylgeranyl diphosphate + L-cysteinyl-[protein] = S-geranylgeranyl-L-cysteinyl-[protein] + diphosphate. The enzymatic reaction requires the aid of the Rab escort protein REP. Catalyzes the transfer of a geranylgeranyl moiety from geranylgeranyl diphosphate to both cysteines of Rab proteins with the C-terminal sequence -CCXX, CXXX, -XCCX and -XCXC, such as RABA1A, RABA2A, RABF2A and RABG2. Involved in the geranylgeranylation of RABA2A. In vitro, can prenylate PGGTI targets with the C-terminal sequence Cys-aliphatic-aliphatic-X (CaaX) with leucine in the terminal position. Substrates with the C-terminal sequence -CSIL such as ARAC11/ROP1 or GG2/AGG2 are prenylated independently of REP and when the beta subunit is associated with the alpha subunit RGTA1. In terms of biological role, required for male fertility and root tip growth. The sequence is that of Geranylgeranyl transferase type-2 subunit beta 1 from Arabidopsis thaliana (Mouse-ear cress).